Here is a 72-residue protein sequence, read N- to C-terminus: Small ribosomal subunit protein bS20 (72 aa).

Belongs to the bacterial ribosomal protein bS20 family.

In terms of biological role, binds directly to 16S ribosomal RNA. In Proteus mirabilis, this protein is Small ribosomal subunit protein bS20 (rpsT).